The primary structure comprises 237 residues: MRPSRRAPDELRAVSLERGVVKYAEGSCLVKFGDTHVLVTATLEERLPPWLKGQGRGWVTAEYGMLPRATLERTRREASAGKQGGRTVEIQRLIGRSLRAAVDLEALGERQITIDCDVIQADGGTRTASITGAWVALADCVNWMKARNMLKAGVLRGNVAAISCGIYNGTPVLDLDYAEDSEADTDANFVMTGEGRIIEVQGTAEKVPFSDDEFLALMALAKKGVARLVDLQKMAVA.

Phosphate-binding positions include Arg-86 and 124–126; that span reads GTR.

The protein belongs to the RNase PH family. As to quaternary structure, homohexameric ring arranged as a trimer of dimers.

The catalysed reaction is tRNA(n+1) + phosphate = tRNA(n) + a ribonucleoside 5'-diphosphate. Functionally, phosphorolytic 3'-5' exoribonuclease that plays an important role in tRNA 3'-end maturation. Removes nucleotide residues following the 3'-CCA terminus of tRNAs; can also add nucleotides to the ends of RNA molecules by using nucleoside diphosphates as substrates, but this may not be physiologically important. Probably plays a role in initiation of 16S rRNA degradation (leading to ribosome degradation) during starvation. This Nitrobacter winogradskyi (strain ATCC 25391 / DSM 10237 / CIP 104748 / NCIMB 11846 / Nb-255) protein is Ribonuclease PH.